Consider the following 420-residue polypeptide: Vasopressin V1a receptor (420 aa).

The disordered stretch occupies residues 1–45 (MSFPRGSYDPAASNSSPRWPLSAEDANSSREAAGHQKGSDPSGDV). The Extracellular portion of the chain corresponds to 1–54 (MSFPRGSYDPAASNSSPRWPLSAEDANSSREAAGHQKGSDPSGDVRNEELAKLE). Residue Asn-27 is glycosylated (N-linked (GlcNAc...) asparagine). Over residues 32 to 45 (AAGHQKGSDPSGDV) the composition is skewed to basic and acidic residues. A helical membrane pass occupies residues 55–75 (IAVLAVIFVVAVLGNSSVLLA). At 76-92 (LHRTPRKTSRMHLFIRH) the chain is on the cytoplasmic side. Residues 93-113 (LSLADLAVAFFQVLPQLCWDI) traverse the membrane as a helical segment. Topologically, residues 114–125 (TYRFRGPDWLCR) are extracellular. The cysteines at positions 124 and 205 are disulfide-linked. The helical transmembrane segment at 126–146 (VVKHLQVFAMFASAYMLVVMT) threads the bilayer. At 147 to 168 (ADRYIAVCHPLKTLQQPARRSR) the chain is on the cytoplasmic side. A helical transmembrane segment spans residues 169-189 (LMIAASWVLSFLLSTPQYFIF). Residues 190 to 225 (SMIEIEVNNGTKTQDCWATFIQPWGTRAYVTWMTSG) lie on the Extracellular side of the membrane. A glycan (N-linked (GlcNAc...) asparagine) is linked at Asn-198. Residues 226–246 (VFVVPVVILGTCYGFICYHIW) traverse the membrane as a helical segment. Residues 247 to 294 (RNVRGKTASRQSKGSGEDVAPFHKGLLVTPCVSSVKTISRAKIRTVKM) are Cytoplasmic-facing. The chain crosses the membrane as a helical span at residues 295-315 (TFVIVTAYILCWAPFFIVQMW). At 316–331 (SVWDDNFIWTDSENPS) the chain is on the extracellular side. The chain crosses the membrane as a helical span at residues 332–352 (ITITALLASLNSCCNPWIYMF). The Cytoplasmic portion of the chain corresponds to 353–420 (FSGHLLQDCV…RSIRFIPVST (68 aa)). S-palmitoyl cysteine attachment occurs at residues Cys-367 and Cys-368. The tract at residues 379 to 411 (DSDNMSRRQTSYSNNRSPTNSTGTWKDSPKSSR) is disordered. Positions 385 to 403 (RRQTSYSNNRSPTNSTGTW) are enriched in polar residues. Position 406 is a phosphoserine (Ser-406).

Belongs to the G-protein coupled receptor 1 family. Vasopressin/oxytocin receptor subfamily.

The protein resides in the cell membrane. Receptor for arginine vasopressin. The activity of this receptor is mediated by G proteins which activate a phosphatidyl-inositol-calcium second messenger system. Involved in social memory formation. This is Vasopressin V1a receptor (Avpr1a) from Microtus montanus (Montane vole).